The sequence spans 365 residues: 1-aminocyclopropane-1-carboxylate oxidase homolog 9 (365 aa).

The 100-residue stretch at 214–313 (KGLLMLCHYY…RISVACFVSS (100 aa)) folds into the Fe2OG dioxygenase domain. Residues His-238, Asp-240, and His-294 each contribute to the Fe cation site. Arg-304 lines the 2-oxoglutarate pocket.

The protein belongs to the iron/ascorbate-dependent oxidoreductase family. Fe(2+) is required as a cofactor.

This Arabidopsis thaliana (Mouse-ear cress) protein is 1-aminocyclopropane-1-carboxylate oxidase homolog 9.